The following is a 22-amino-acid chain: Leptoglycin (22 aa).

The segment at 1–22 (GLLGGLLGPLLGGGGGGGGGLL) is disordered.

Expressed by the skin glands.

Its subcellular location is the secreted. Antimicrobial protein. Has antibacterial activity against the Gram-negative bacteria E.coli ATCC 28922 (MIC=50 uM), P.aeruginosa ATCC 9027 (MIC=8 uM) and C.freundii ATCC 8090 (MIC=75 uM). Does not have hemolytic activity. The protein is Leptoglycin of Leptodactylus pentadactylus (Smokey jungle frog).